The chain runs to 350 residues: C5a anaphylatoxin chemotactic receptor 1 (350 aa).

Residues 1–37 (MDSFDYTTPDYGHYDDKDTLDLNTPVDKTSNTLRVPD) are Extracellular-facing. A required for CHIPS binding region spans residues 10-18 (DYGHYDDKD). 2 positions are modified to sulfotyrosine: Tyr11 and Tyr14. Residues 21 to 30 (DLNTPVDKTS) are involved in C5a binding. A helical transmembrane segment spans residues 38–64 (ILALVIFAVVFLVGVLGNALVVWVTAF). The Cytoplasmic portion of the chain corresponds to 65 to 69 (EAKRT). Residues 70–93 (INAIWFLNLAVADFLSCLALPILF) form a helical membrane-spanning segment. Residues 94-110 (TSIVQHHHWPFGGAACS) lie on the Extracellular side of the membrane. An intrachain disulfide couples Cys109 to Cys188. A helical membrane pass occupies residues 111–132 (ILPSLILLNMYASILLLATISA). The Cytoplasmic portion of the chain corresponds to 133–153 (DRFLLVFKPIWCQNFRGAGLA). Residues 154 to 174 (WIACAVAWGLALLLTIPSFLY) form a helical membrane-spanning segment. Residues 175 to 200 (RVVREEYFPPKVLCGVDYSHDKRRER) are Extracellular-facing. The helical transmembrane segment at 201 to 226 (AVAIVRLVLGFLWPLLTLMICYTFIL) threads the bilayer. Over 227–242 (LRTWSRRATRSTKTLK) the chain is Cytoplasmic. A helical transmembrane segment spans residues 243–265 (VVVAVVASFFIFWLPYQVTGIMM). Over 266 to 282 (SFLEPSSPTFRLLKKLD) the chain is Extracellular. The chain crosses the membrane as a helical span at residues 283–303 (SLCVSFAYINCCINPIIYVVA). The Cytoplasmic segment spans residues 304–350 (GQGFQGRLQKSLPSLLRNVLTEESVVRESKSFARSTVDTMADKTQAV). Ser314, Ser317, Ser327, Ser332, Ser334, and Ser338 each carry phosphoserine.

This sequence belongs to the G-protein coupled receptor 1 family. As to quaternary structure, homodimer. May also form higher-order oligomers. Interacts (when phosphorylated) with ARRB1 and ARRB2; the interaction is associated with internalization of C5aR. Interacts (via N-terminal domain) with S.aureus chemotaxis inhibitory protein (CHIPS); the interaction blocks the receptor and may thus inhibit the immune response. In terms of processing, sulfation plays a critical role in the association of C5aR with C5a, but no significant role in the ability of the receptor to transduce a signal and mobilize calcium in response to a small peptide agonist. Sulfation at Tyr-14 is important for CHIPS binding. Post-translationally, phosphorylated on serine residues in response to C5a binding, resulting in internalization of the receptor and short-term desensitization to C5a.

It is found in the cell membrane. It localises to the cytoplasmic vesicle. Its function is as follows. Receptor for the chemotactic and inflammatory peptide anaphylatoxin C5a. The ligand interacts with at least two sites on the receptor: a high-affinity site on the extracellular N-terminus, and a second site in the transmembrane region which activates downstream signaling events. Receptor activation stimulates chemotaxis, granule enzyme release, intracellular calcium release and superoxide anion production. The protein is C5a anaphylatoxin chemotactic receptor 1 (C5AR1) of Pan troglodytes (Chimpanzee).